Consider the following 550-residue polypeptide: Probable methionine--tRNA ligase, cytoplasmic (550 aa).

The short motif at 10-20 (PYVNNQPHLGN) is the 'HIGH' region element. Residues 328-332 (KFSKS) carry the 'KMSKS' region motif. Lysine 331 lines the ATP pocket.

It belongs to the class-I aminoacyl-tRNA synthetase family.

It is found in the cytoplasm. The catalysed reaction is tRNA(Met) + L-methionine + ATP = L-methionyl-tRNA(Met) + AMP + diphosphate. The polypeptide is Probable methionine--tRNA ligase, cytoplasmic (Encephalitozoon cuniculi (strain GB-M1) (Microsporidian parasite)).